Reading from the N-terminus, the 626-residue chain is DNA-directed RNA polymerase subunit gamma (626 aa).

Positions 71, 73, 86, and 89 each coordinate Zn(2+). Residues aspartate 467, aspartate 469, and aspartate 471 each coordinate Mg(2+).

It belongs to the RNA polymerase beta' chain family. RpoC1 subfamily. As to quaternary structure, in cyanobacteria the RNAP catalytic core is composed of 2 alpha, 1 beta, 1 beta', 1 gamma and 1 omega subunit. When a sigma factor is associated with the core the holoenzyme is formed, which can initiate transcription. Mg(2+) serves as cofactor. Zn(2+) is required as a cofactor.

The catalysed reaction is RNA(n) + a ribonucleoside 5'-triphosphate = RNA(n+1) + diphosphate. In terms of biological role, DNA-dependent RNA polymerase catalyzes the transcription of DNA into RNA using the four ribonucleoside triphosphates as substrates. The chain is DNA-directed RNA polymerase subunit gamma from Microcystis aeruginosa (strain NIES-843 / IAM M-2473).